Reading from the N-terminus, the 592-residue chain is Arginine--tRNA ligase (592 aa).

Positions 129–139 match the 'HIGH' region motif; sequence ANPTGPLHVGH.

This sequence belongs to the class-I aminoacyl-tRNA synthetase family. Monomer.

Its subcellular location is the cytoplasm. The catalysed reaction is tRNA(Arg) + L-arginine + ATP = L-arginyl-tRNA(Arg) + AMP + diphosphate. The protein is Arginine--tRNA ligase of Dichelobacter nodosus (strain VCS1703A).